Here is a 548-residue protein sequence, read N- to C-terminus: Probable malate:quinone oxidoreductase (548 aa).

Residues 521–548 form a disordered region; it reads DKPQAADSTPKPQLKPQPVQKEVADIAL. Positions 530–541 are enriched in low complexity; it reads PKPQLKPQPVQK.

The protein belongs to the MQO family. Requires FAD as cofactor.

The enzyme catalyses (S)-malate + a quinone = a quinol + oxaloacetate. It functions in the pathway carbohydrate metabolism; tricarboxylic acid cycle; oxaloacetate from (S)-malate (quinone route): step 1/1. In Escherichia coli O17:K52:H18 (strain UMN026 / ExPEC), this protein is Probable malate:quinone oxidoreductase.